We begin with the raw amino-acid sequence, 296 residues long: ATP synthase gamma chain (296 aa).

Belongs to the ATPase gamma chain family. In terms of assembly, F-type ATPases have 2 components, CF(1) - the catalytic core - and CF(0) - the membrane proton channel. CF(1) has five subunits: alpha(3), beta(3), gamma(1), delta(1), epsilon(1). CF(0) has three main subunits: a, b and c.

The protein resides in the cell inner membrane. Produces ATP from ADP in the presence of a proton gradient across the membrane. The gamma chain is believed to be important in regulating ATPase activity and the flow of protons through the CF(0) complex. The polypeptide is ATP synthase gamma chain (Gluconobacter oxydans (strain 621H) (Gluconobacter suboxydans)).